The chain runs to 209 residues: dITP/XTP pyrophosphatase (209 aa).

Position 7-12 (7-12) interacts with substrate; that stretch reads SSHGYK. D70 (proton acceptor) is an active-site residue. D70 contributes to the Mg(2+) binding site. Substrate is bound by residues S71, 154-157, K177, and 182-183; these read FGYD and HR.

It belongs to the HAM1 NTPase family. As to quaternary structure, homodimer. Mg(2+) serves as cofactor.

It catalyses the reaction XTP + H2O = XMP + diphosphate + H(+). The catalysed reaction is dITP + H2O = dIMP + diphosphate + H(+). It carries out the reaction ITP + H2O = IMP + diphosphate + H(+). Its function is as follows. Pyrophosphatase that catalyzes the hydrolysis of nucleoside triphosphates to their monophosphate derivatives, with a high preference for the non-canonical purine nucleotides XTP (xanthosine triphosphate), dITP (deoxyinosine triphosphate) and ITP. Seems to function as a house-cleaning enzyme that removes non-canonical purine nucleotides from the nucleotide pool, thus preventing their incorporation into DNA/RNA and avoiding chromosomal lesions. This Chlamydia trachomatis serovar A (strain ATCC VR-571B / DSM 19440 / HAR-13) protein is dITP/XTP pyrophosphatase.